The following is a 467-amino-acid chain: Transcription factor TGAL7 (467 aa).

The span at 1 to 10 shows a compositional bias: basic and acidic residues; sequence MGGSREEDRQ. Disordered stretches follow at residues 1–42 and 105–184; these read MGGS…KESS and QLQV…KTLR. Over residues 25 to 41 the composition is skewed to low complexity; it reads SSSPTTMIASSSMSKES. Residues 120–129 show a composition bias toward polar residues; it reads QGGQKINSSV. The segment covering 145 to 157 has biased composition (basic and acidic residues); that stretch reads KDNKNSSLIKKEG. Over residues 158 to 168 the composition is skewed to polar residues; it reads SSSGKGATTSN. Basic and acidic residues predominate over residues 169 to 182; that stretch reads DPEREGRRTLDPKT. The bZIP domain occupies 179–223; sequence DPKTLRRLAQNREAARKSRLRKKAYIQQLESSRIRLSQLEQQVHV. The segment at 181–201 is basic motif; it reads KTLRRLAQNREAARKSRLRKK. The interval 207–221 is leucine-zipper; it reads LESSRIRLSQLEQQV. The DOG1 domain occupies 247–458; it reads ASLFDLEYGR…RALSTLWVAR (212 aa).

It belongs to the bZIP family. In terms of assembly, interacts with NPR5/NH4, NH5.1 and NH5.2.

It localises to the nucleus. Transcriptional regulator involved in defense response. The sequence is that of Transcription factor TGAL7 from Oryza sativa subsp. japonica (Rice).